Consider the following 108-residue polypeptide: Nucleoid-associated protein Avin_19840 (108 aa).

It belongs to the YbaB/EbfC family. Homodimer.

It localises to the cytoplasm. Its subcellular location is the nucleoid. In terms of biological role, binds to DNA and alters its conformation. May be involved in regulation of gene expression, nucleoid organization and DNA protection. The sequence is that of Nucleoid-associated protein Avin_19840 from Azotobacter vinelandii (strain DJ / ATCC BAA-1303).